Here is a 397-residue protein sequence, read N- to C-terminus: DNA-binding protein (397 aa).

Zn(2+) is bound by residues Cys116 and His118. The tract at residues 129-161 is flexible loop; it reads IEMAATSESGVAALKEGRGAVEINRWGRQVVKI. Zn(2+)-binding residues include Cys169, Cys185, Cys225, Cys227, Cys276, and Cys289. The segment at 335–397 is C-terminal arm, DBP binding; the sequence is ALLPEGSVNE…IVLESSEEDE (63 aa). The tract at residues 338–397 is disordered; that stretch reads PEGSVNEDENPFGLDNSEDEEEVVPPSPPSPARKRTRTTVAEVHHKKKKKIVLESSEEDE. The span at 342-360 shows a compositional bias: acidic residues; sequence VNEDENPFGLDNSEDEEEV.

Belongs to the adenoviridae E2A DNA-binding protein family. Homomultimerizes on viral ssDNA bound to pTP. Forms a initiation complex with viral polymerase, pTP and hosts NFIA and POU2F1/OCT1. Interacts with host SRCAP.

It localises to the host nucleus. Plays a role in the elongation phase of viral strand displacement replication by unwinding the template in an ATP-independent fashion, employing its capacity to form multimers. Also enhances the rate of initiation. Released from template upon second strand synthesis. Assembles in complex with viral pTP, viral pol, host NFIA and host POU2F1/OCT1 on viral origin of replication. Covers the whole ssDNA genome during synthesis. The complementary strand synthesis induces its relese from DNA template. May inhibit cellular transcription mediated by the interaction between host SRCAP and CBP. In Snake adenovirus serotype 1 (SnAdV-1), this protein is DNA-binding protein.